A 421-amino-acid polypeptide reads, in one-letter code: Glutamate dehydrogenase (421 aa).

The active site involves K105. Residue 220–226 participates in NAD(+) binding; the sequence is GYGNAGY.

It belongs to the Glu/Leu/Phe/Val dehydrogenases family. In terms of assembly, homohexamer.

It localises to the cytoplasm. The protein resides in the chromosome. It carries out the reaction L-glutamate + NAD(+) + H2O = 2-oxoglutarate + NH4(+) + NADH + H(+). The enzyme catalyses L-glutamate + NADP(+) + H2O = 2-oxoglutarate + NH4(+) + NADPH + H(+). This Thermococcus kodakarensis (strain ATCC BAA-918 / JCM 12380 / KOD1) (Pyrococcus kodakaraensis (strain KOD1)) protein is Glutamate dehydrogenase (gdhA).